The following is a 634-amino-acid chain: Probable potassium transport system protein Kup 2 (634 aa).

Transmembrane regions (helical) follow at residues Leu-15–Phe-35, Val-55–Leu-75, Trp-101–Ile-121, Gly-142–Phe-162, Leu-173–Ile-193, Ala-208–Leu-228, Trp-252–Leu-272, Leu-303–Tyr-323, Ile-351–Phe-371, Tyr-381–Trp-401, Pro-408–Ala-428, and Glu-435–Leu-455.

The protein belongs to the HAK/KUP transporter (TC 2.A.72) family.

Its subcellular location is the cell inner membrane. It carries out the reaction K(+)(in) + H(+)(in) = K(+)(out) + H(+)(out). Its function is as follows. Transport of potassium into the cell. Likely operates as a K(+):H(+) symporter. This Novosphingobium aromaticivorans (strain ATCC 700278 / DSM 12444 / CCUG 56034 / CIP 105152 / NBRC 16084 / F199) protein is Probable potassium transport system protein Kup 2.